We begin with the raw amino-acid sequence, 221 residues long: Epididymal secretory glutathione peroxidase (221 aa).

The first 21 residues, 1–21 (MTAWLGASYVLPILLVSFVQT), serve as a signal peptide directing secretion. The active site involves Cys-73.

It belongs to the glutathione peroxidase family. As to expression, epididymis.

The protein localises to the secreted. The enzyme catalyses 2 glutathione + H2O2 = glutathione disulfide + 2 H2O. Its function is as follows. Protects cells and enzymes from oxidative damage, by catalyzing the reduction of hydrogen peroxide, lipid peroxides and organic hydroperoxide, by glutathione. May constitute a glutathione peroxidase-like protective system against peroxide damage in sperm membrane lipids. This chain is Epididymal secretory glutathione peroxidase (GPX5), found in Canis lupus familiaris (Dog).